The sequence spans 318 residues: NADH-ubiquinone oxidoreductase chain 1 (318 aa).

Transmembrane regions (helical) follow at residues 2 to 22 (FLTN…FLTL), 36 to 56 (GPNI…IKLF), 69 to 89 (LLFT…WIPL), 100 to 120 (LGML…LWSG), 130 to 152 (IGAL…ILLH), 171 to 191 (HIWL…STLA), 217 to 237 (AGPF…MNAL), 254 to 273 (LYST…FLWI), and 294 to 314 (LPLT…LTSI).

This sequence belongs to the complex I subunit 1 family.

The protein localises to the mitochondrion inner membrane. The enzyme catalyses a ubiquinone + NADH + 5 H(+)(in) = a ubiquinol + NAD(+) + 4 H(+)(out). Core subunit of the mitochondrial membrane respiratory chain NADH dehydrogenase (Complex I) that is believed to belong to the minimal assembly required for catalysis. Complex I functions in the transfer of electrons from NADH to the respiratory chain. The immediate electron acceptor for the enzyme is believed to be ubiquinone. This chain is NADH-ubiquinone oxidoreductase chain 1 (MT-ND1), found in Cyclopes didactylus (Silky anteater).